A 529-amino-acid chain; its full sequence is MVTINDLSFNPDYSSISVSTSDGFKIFNCEPFGEFYSSQESPLRKSISNSLEDSAGCQNPTHSKTDSQDTPARFPTAFLKMLFSTSLTIVVPQTQDNLGNRLLKIYNLKQNLKICELNFPSSIIDIKLNRKRLLVVLDTGQLYIYDLSCVRLLKILQLSFNEHDGDQKFIGDLSADDSSWLIIPVQSTNNQTDLLNAETGSQPSTPKLTPSDSVINTGSYSQYLEFTRNSSLSNLKKKNKLITLEDIKNDSEGWVVVYDTINLAPVVIFEAHHSTIARICISHRDNKVATASIKGTIIRIFDLKEFEGKVKVHKVKNLRRGHNLVKVNSLSFHNDNHILGCGSESNTIHLFKIHEEESDICTNENSEDRTNHNSDYEDSDGDTSKSSEDLNENLANLLISKPLDPVPMETEDKLSSSWFVKTKKLINNQYTSSIIKKLPYKDYFENLIWEPPQRSFAYIKLPEYAPHNEKDPRSNKVEIGFNNDLVFIASYHTGNFYQYQIPKQRGPVSSINEDDKREECSLISQFNLI.

The span at 49–62 (NSLEDSAGCQNPTH) shows a compositional bias: polar residues. Positions 49 to 70 (NSLEDSAGCQNPTHSKTDSQDT) are disordered. WD repeat units lie at residues 271–311 (AHHS…GKVK) and 321–361 (GHNL…SDIC). The L/FRRG motif signature appears at 318 to 322 (LRRGH). A disordered region spans residues 362-388 (TNENSEDRTNHNSDYEDSDGDTSKSSE). Residues 366-375 (SEDRTNHNSD) show a composition bias toward basic and acidic residues.

The protein belongs to the WD repeat PROPPIN family.

The protein resides in the cytoplasm. It is found in the membrane. Its subcellular location is the vacuole membrane. Required for cytoplasm to vacuole transport (Cvt) vesicles formation and mitophagy. Involved in binding of phosphatidylethanolamine to ATG8 and in recruitment of ATG8 and ATG5 to the pre-autophagosomal structure. Protects ATG8 from ARG4-mediated cleavage. In Candida albicans (strain SC5314 / ATCC MYA-2876) (Yeast), this protein is Autophagy-related protein 21 (ATG21).